Reading from the N-terminus, the 102-residue chain is Large ribosomal subunit protein bL21 (102 aa).

It belongs to the bacterial ribosomal protein bL21 family. As to quaternary structure, part of the 50S ribosomal subunit. Contacts protein L20.

This protein binds to 23S rRNA in the presence of protein L20. The polypeptide is Large ribosomal subunit protein bL21 (Macrococcus caseolyticus (strain JCSC5402) (Macrococcoides caseolyticum)).